The chain runs to 68 residues: uncharacterized protein (68 aa).

Positions 2 to 67 (KTITLNIKGI…VIEDAGFDAT (66 aa)) constitute an HMA domain. A metal cation is bound by residues cysteine 13 and cysteine 16.

This is an uncharacterized protein from Haemophilus influenzae (strain ATCC 51907 / DSM 11121 / KW20 / Rd).